A 119-amino-acid polypeptide reads, in one-letter code: Holo-[acyl-carrier-protein] synthase (119 aa).

Residues Asp-8 and Glu-53 each coordinate Mg(2+).

Belongs to the P-Pant transferase superfamily. AcpS family. Mg(2+) is required as a cofactor.

Its subcellular location is the cytoplasm. The catalysed reaction is apo-[ACP] + CoA = holo-[ACP] + adenosine 3',5'-bisphosphate + H(+). In terms of biological role, transfers the 4'-phosphopantetheine moiety from coenzyme A to a Ser of acyl-carrier-protein. This chain is Holo-[acyl-carrier-protein] synthase, found in Petrotoga mobilis (strain DSM 10674 / SJ95).